Reading from the N-terminus, the 365-residue chain is UDP-N-acetylglucosamine--N-acetylmuramyl-(pentapeptide) pyrophosphoryl-undecaprenol N-acetylglucosamine transferase (365 aa).

Residues 12-14, asparagine 128, arginine 169, serine 195, and glutamine 296 contribute to the UDP-N-acetyl-alpha-D-glucosamine site; that span reads TGG.

This sequence belongs to the glycosyltransferase 28 family. MurG subfamily.

Its subcellular location is the cell inner membrane. The enzyme catalyses di-trans,octa-cis-undecaprenyl diphospho-N-acetyl-alpha-D-muramoyl-L-alanyl-D-glutamyl-meso-2,6-diaminopimeloyl-D-alanyl-D-alanine + UDP-N-acetyl-alpha-D-glucosamine = di-trans,octa-cis-undecaprenyl diphospho-[N-acetyl-alpha-D-glucosaminyl-(1-&gt;4)]-N-acetyl-alpha-D-muramoyl-L-alanyl-D-glutamyl-meso-2,6-diaminopimeloyl-D-alanyl-D-alanine + UDP + H(+). It functions in the pathway cell wall biogenesis; peptidoglycan biosynthesis. In terms of biological role, cell wall formation. Catalyzes the transfer of a GlcNAc subunit on undecaprenyl-pyrophosphoryl-MurNAc-pentapeptide (lipid intermediate I) to form undecaprenyl-pyrophosphoryl-MurNAc-(pentapeptide)GlcNAc (lipid intermediate II). The polypeptide is UDP-N-acetylglucosamine--N-acetylmuramyl-(pentapeptide) pyrophosphoryl-undecaprenol N-acetylglucosamine transferase (Gluconobacter oxydans (strain 621H) (Gluconobacter suboxydans)).